Here is a 365-residue protein sequence, read N- to C-terminus: HLA class I histocompatibility antigen, A alpha chain (365 aa).

Positions Met1–Ala24 are cleaved as a signal peptide. Positions Val3–Leu11 are VL9 epitope. The interval Gly25–Ala114 is alpha-1. The Extracellular segment spans residues Gly25–Ile308. Tyr31 provides a ligand contact to a peptide antigen. Residue Tyr83 is modified to Sulfotyrosine. A peptide antigen is bound by residues Thr97 and Tyr108. The N-linked (GlcNAc...) asparagine glycan is linked to Asn110. The segment at Gly115 to Thr206 is alpha-2. A disulfide bond links Cys125 and Cys188. Residues Asp140, Thr167, Lys170, Tyr183, and Tyr195 each coordinate a peptide antigen. Residues Asp207–Trp298 are alpha-3. An Ig-like C1-type domain is found at Pro209–Thr295. A disulfide bond links Cys227 and Cys283. The connecting peptide stretch occupies residues Glu299–Ile308. A helical membrane pass occupies residues Val309 to Trp332. Residues Arg333–Val365 lie on the Cytoplasmic side of the membrane. The tract at residues Arg339–Val365 is disordered. Phosphoserine is present on Ser343. Tyr344 bears the Phosphotyrosine mark. Over residues Gln346 to Ser359 the composition is skewed to low complexity. Residues Ser349, Ser350, Ser352, Ser356, and Ser359 each carry the phosphoserine modification.

It belongs to the MHC class I family. Heterotrimer that consists of an alpha chain HLA-A, a beta chain B2M and a peptide (peptide-HLA-A-B2M). Early in biogenesis, HLA-A-B2M dimer interacts with the components of the peptide-loading complex composed of TAPBP, TAP1-TAP2, TAPBPL, PDIA3/ERP57 and CALR. Interacts with TAP1-TAP2 transporter via TAPBP; this interaction is obligatory for the loading of peptide epitopes delivered to the ER by TAP1-TAP2 transporter. Interacts with TAPBPL; TAPBPL binds peptide-free HLA-A-B2M complexes or those loaded with low affinity peptides, likely facilitating peptide exchange for higher affinity peptides. Only optimally assembled peptide-HLA-B2M trimer translocates to the surface of antigen-presenting cells, where it interacts with TCR and CD8 coreceptor on the surface of T cells. HLA-A (via polymorphic alpha-1 and alpha-2 domains) interacts with antigen-specific TCR (via CDR3 domains). One HLA-A molecule (mainly via nonpolymorphic alpha-3 domain) interacts with one CD8A homodimer (via CDR-like loop); this interaction ensures peptide-HLA-A-B2M recognition by CD8-positive T cells only. Alleles A*23:01; A*24:02 and A*32:01 interact (via Bw4 motif) with KIR3DL1 on NK cells; this interaction is direct. In terms of assembly, (Microbial infection) Interacts with HHV-8 MIR1 protein. As to quaternary structure, (Microbial infection) Interacts with HTLV-1 accessory protein p12I. In terms of processing, (Microbial infection) Polyubiquitinated in a post ER compartment by interaction with human herpesvirus 8 MIR1 protein. This targets the protein for rapid degradation via the ubiquitin system. N-linked glycosylation at Asn-110. As to expression, ubiquitous.

Its subcellular location is the cell membrane. The protein resides in the endoplasmic reticulum membrane. Functionally, antigen-presenting major histocompatibility complex class I (MHCI) molecule. In complex with B2M/beta 2 microglobulin displays primarily viral and tumor-derived peptides on antigen-presenting cells for recognition by alpha-beta T cell receptor (TCR) on HLA-A-restricted CD8-positive T cells, guiding antigen-specific T cell immune response to eliminate infected or transformed cells. May also present self-peptides derived from the signal sequence of secreted or membrane proteins, although T cells specific for these peptides are usually inactivated to prevent autoreactivity. Both the peptide and the MHC molecule are recognized by TCR, the peptide is responsible for the fine specificity of antigen recognition and MHC residues account for the MHC restriction of T cells. Typically presents intracellular peptide antigens of 8 to 13 amino acids that arise from cytosolic proteolysis via IFNG-induced immunoproteasome or via endopeptidase IDE/insulin-degrading enzyme. Can bind different peptides containing allele-specific binding motifs, which are mainly defined by anchor residues at position 2 and 9. Its function is as follows. Allele A*01:01: Presents a restricted peptide repertoire including viral epitopes derived from IAV NP/nucleoprotein (CTELKLSDY), IAV PB1/polymerase basic protein 1 (VSDGGPNLY), HAdV-11 capsid L3/hexon protein (LTDLGQNLLY), SARS-CoV-2 3a/ORF3a (FTSDYYQLY) as well as tumor peptide antigens including MAGE1 (EADPTGHSY), MAGEA3 (EVDPIGHLY) and WT1 (TSEKRPFMCAY), all having in common a canonical motif with a negatively charged Asp or Glu residue at position 3 and a Tyr anchor residue at the C-terminus. A number of HLA-A*01:01-restricted peptides carry a post-translational modification with oxidation and N-terminal acetylation being the most frequent. Fails to present highly immunogenic peptides from the EBV latent antigens. Allele A*02:01: A major allele in human populations, presents immunodominant viral epitopes derived from IAV M/matrix protein 1 (GILGFVFTL), HIV-1 env (TLTSCNTSV), HIV-1 gag-pol (ILKEPVHGV), HTLV-1 Tax (LLFGYPVYV), HBV C/core antigen (FLPSDFFPS), HCMV UL83/pp65 (NLVPMVATV) as well as tumor peptide antigens including MAGEA4 (GVYDGREHTV), WT1 (RMFPNAPYL) and CTAG1A/NY-ESO-1 (SLLMWITQC), all having in common hydrophobic amino acids at position 2 and at the C-terminal anchors. In terms of biological role, allele A*03:01: Presents viral epitopes derived from IAV NP (ILRGSVAHK), HIV-1 nef (QVPLRPMTYK), HIV-1 gag-pol (AIFQSSMTK), SARS-CoV-2 N/nucleoprotein (KTFPPTEPK) as well as tumor peptide antigens including PMEL (LIYRRRLMK), NODAL (HAYIQSLLK), TRP-2 (RMYNMVPFF), all having in common hydrophobic amino acids at position 2 and Lys or Arg anchor residues at the C-terminus. May also display spliced peptides resulting from the ligation of two separate proteasomal cleavage products that are not contiguous in the parental protein. Functionally, allele A*11:01: Presents several immunodominant epitopes derived from HIV-1 gag-pol and HHV-4 EBNA4, containing the peptide motif with Val, Ile, Thr, Leu, Tyr or Phe at position 2 and Lys anchor residue at the C-terminus. Important in the control of HIV-1, EBV and HBV infections. Presents an immunodominant epitope derived from SARS-CoV-2 N/nucleoprotein (KTFPPTEPK). Its function is as follows. Allele A*23:01: Interacts with natural killer (NK) cell receptor KIR3DL1 and may contribute to functional maturation of NK cells and self-nonself discrimination during innate immune response. Allele A*24:02: Presents viral epitopes derived from HIV-1 nef (RYPLTFGWCF), EBV lytic- and latent-cycle antigens BRLF1 (TYPVLEEMF), BMLF1 (DYNFVKQLF) and LMP2 (IYVLVMLVL), SARS-CoV nucleocapsid/N (QFKDNVILL), as well as tumor peptide antigens including PRAME (LYVDSLFFL), all sharing a common signature motif, namely an aromatic residue Tyr or Phe at position 2 and a nonhydrophobic anchor residue Phe, Leu or Iso at the C-terminus. Interacts with natural killer (NK) cell receptor KIR3DL1 and may contribute to functional maturation of NK cells and self-nonself discrimination during innate immune response. In terms of biological role, allele A*26:01: Presents several epitopes derived from HIV-1 gag-pol (EVIPMFSAL, ETKLGKAGY) and env (LVSDGGPNLY), carrying as anchor residues preferentially Glu at position 1, Val or Thr at position 2 and Tyr at the C-terminus. Functionally, allele A*29:02: Presents peptides having a common motif, namely a Glu residue at position 2 and Tyr or Leu anchor residues at the C-terminus. Its function is as follows. Allele A*32:01: Interacts with natural killer (NK) cell receptor KIR3DL1 and may contribute to functional maturation of NK cells and self-nonself discrimination during innate immune response. Allele A*68:01: Presents viral epitopes derived from IAV NP (KTGGPIYKR) and HIV-1 tat (ITKGLGISYGR), having a common signature motif namely, Val or Thr at position 2 and positively charged residues Arg or Lys at the C-terminal anchor. In terms of biological role, allele A*74:01: Presents immunodominant HIV-1 epitopes derived from gag-pol (GQMVHQAISPR, QIYPGIKVR) and rev (RQIHSISER), carrying an aliphatic residue at position 2 and Arg anchor residue at the C-terminus. May contribute to viral load control in chronic HIV-1 infection. This Homo sapiens (Human) protein is HLA class I histocompatibility antigen, A alpha chain.